The following is a 146-amino-acid chain: Type II secretion system core protein G (146 aa).

Positions M1–G9 are cleaved as a propeptide — leader sequence. The residue at position 10 (F10) is an N-methylphenylalanine. Residues F10–V30 form a helical membrane-spanning segment.

This sequence belongs to the GSP G family. As to quaternary structure, type II secretion system is composed of four main components: the outer membrane complex, the inner membrane complex, the cytoplasmic secretion ATPase and the periplasm-spanning pseudopilus. Forms homomultimers. Interacts with EspL. Cleaved by the prepilin peptidase. In terms of processing, methylated by prepilin peptidase at the amino group of the N-terminal phenylalanine once the leader sequence is cleaved.

Its subcellular location is the cell inner membrane. In terms of biological role, core component of the type II secretion system required for the energy-dependent secretion of extracellular factors such as proteases and toxins from the periplasm. Pseudopilin (pilin-like) protein that polymerizes to form the pseudopilus. Further polymerization triggers pseudopilus growth. This Vibrio cholerae serotype O1 (strain ATCC 39315 / El Tor Inaba N16961) protein is Type II secretion system core protein G (epsG).